The sequence spans 371 residues: Alanine dehydrogenase (371 aa).

Arg-15 and Lys-74 together coordinate substrate. Residue His-95 is the Proton donor/acceptor of the active site. NAD(+) contacts are provided by residues Ser-133, Gln-177–Ala-178, Asp-197, Ser-219, Val-238–Leu-239, Ile-266–Asp-269, and Val-298–Met-301. Asp-269 (proton donor/acceptor) is an active-site residue.

It belongs to the AlaDH/PNT family. In terms of assembly, homohexamer. Trimer of dimer.

The catalysed reaction is L-alanine + NAD(+) + H2O = pyruvate + NH4(+) + NADH + H(+). It participates in amino-acid degradation; L-alanine degradation via dehydrogenase pathway; NH(3) and pyruvate from L-alanine: step 1/1. Functionally, catalyzes the reversible reductive amination of pyruvate to L-alanine. May play a role in cell wall synthesis as L-alanine is an important constituent of the peptidoglycan layer. The chain is Alanine dehydrogenase (ald) from Staphylococcus epidermidis (strain ATCC 35984 / DSM 28319 / BCRC 17069 / CCUG 31568 / BM 3577 / RP62A).